A 151-amino-acid chain; its full sequence is uncharacterized protein (151 aa).

This is an uncharacterized protein from Acanthamoeba polyphaga mimivirus (APMV).